A 243-amino-acid chain; its full sequence is Proteasome subunit beta 1 (243 aa).

Over residues 1–14 the composition is skewed to polar residues; that stretch reads MRAPQHNSDFSRTV. The disordered stretch occupies residues 1–34; that stretch reads MRAPQHNSDFSRTVDQLADDPNPYEPEIGSMPQN. Positions 1–48 are cleaved as a propeptide — removed in mature form; by autocatalysis; sequence MRAPQHNSDFSRTVDQLADDPNPYEPEIGSMPQNDLTRADLDNVNKTG. The active-site Nucleophile is Thr-49.

Belongs to the peptidase T1B family. The 20S proteasome core is composed of 14 alpha and 14 beta subunits that assemble into four stacked heptameric rings, resulting in a barrel-shaped structure. The two inner rings, each composed of seven catalytic beta subunits, are sandwiched by two outer rings, each composed of seven alpha subunits. The catalytic chamber with the active sites is on the inside of the barrel. Has a gated structure, the ends of the cylinder being occluded by the N-termini of the alpha-subunits. Is capped at one or both ends by the proteasome regulatory ATPase, PAN.

The protein localises to the cytoplasm. The enzyme catalyses Cleavage of peptide bonds with very broad specificity.. With respect to regulation, the formation of the proteasomal ATPase PAN-20S proteasome complex, via the docking of the C-termini of PAN into the intersubunit pockets in the alpha-rings, triggers opening of the gate for substrate entry. Interconversion between the open-gate and close-gate conformations leads to a dynamic regulation of the 20S proteasome proteolysis activity. In terms of biological role, component of the proteasome core, a large protease complex with broad specificity involved in protein degradation. This is Proteasome subunit beta 1 from Haloterrigena turkmenica (strain ATCC 51198 / DSM 5511 / JCM 9101 / NCIMB 13204 / VKM B-1734 / 4k) (Halococcus turkmenicus).